The following is a 286-amino-acid chain: Pyridoxal kinase PdxY (286 aa).

Substrate contacts are provided by residues Ser9 and 44 to 45 (TQ). Residues Asp111, Glu148, and Lys181 each coordinate ATP. Position 222 (Asp222) interacts with substrate.

Belongs to the pyridoxine kinase family. PdxY subfamily. As to quaternary structure, homodimer. The cofactor is Mg(2+).

The catalysed reaction is pyridoxal + ATP = pyridoxal 5'-phosphate + ADP + H(+). It functions in the pathway cofactor metabolism; pyridoxal 5'-phosphate salvage; pyridoxal 5'-phosphate from pyridoxal: step 1/1. Its function is as follows. Pyridoxal kinase involved in the salvage pathway of pyridoxal 5'-phosphate (PLP). Catalyzes the phosphorylation of pyridoxal to PLP. The protein is Pyridoxal kinase PdxY of Histophilus somni (strain 129Pt) (Haemophilus somnus).